The primary structure comprises 437 residues: UDP-N-acetylmuramoylalanine--D-glutamate ligase (437 aa).

An ATP-binding site is contributed by 112-118 (GSNGKST).

Belongs to the MurCDEF family.

It is found in the cytoplasm. The enzyme catalyses UDP-N-acetyl-alpha-D-muramoyl-L-alanine + D-glutamate + ATP = UDP-N-acetyl-alpha-D-muramoyl-L-alanyl-D-glutamate + ADP + phosphate + H(+). The protein operates within cell wall biogenesis; peptidoglycan biosynthesis. In terms of biological role, cell wall formation. Catalyzes the addition of glutamate to the nucleotide precursor UDP-N-acetylmuramoyl-L-alanine (UMA). This is UDP-N-acetylmuramoylalanine--D-glutamate ligase from Haemophilus influenzae (strain PittEE).